We begin with the raw amino-acid sequence, 517 residues long: Bifunctional purine biosynthesis protein PurH (517 aa).

An MGS-like domain is found at 1-146 (MAPIALLSVS…KNHAHVAVLT (146 aa)).

This sequence belongs to the PurH family.

The enzyme catalyses (6R)-10-formyltetrahydrofolate + 5-amino-1-(5-phospho-beta-D-ribosyl)imidazole-4-carboxamide = 5-formamido-1-(5-phospho-D-ribosyl)imidazole-4-carboxamide + (6S)-5,6,7,8-tetrahydrofolate. It carries out the reaction IMP + H2O = 5-formamido-1-(5-phospho-D-ribosyl)imidazole-4-carboxamide. The protein operates within purine metabolism; IMP biosynthesis via de novo pathway; 5-formamido-1-(5-phospho-D-ribosyl)imidazole-4-carboxamide from 5-amino-1-(5-phospho-D-ribosyl)imidazole-4-carboxamide (10-formyl THF route): step 1/1. It participates in purine metabolism; IMP biosynthesis via de novo pathway; IMP from 5-formamido-1-(5-phospho-D-ribosyl)imidazole-4-carboxamide: step 1/1. This Prochlorococcus marinus (strain MIT 9313) protein is Bifunctional purine biosynthesis protein PurH.